The sequence spans 344 residues: Probable dual-specificity RNA methyltransferase RlmN (344 aa).

Glu92 (proton acceptor) is an active-site residue. Positions 98 to 325 (DEDRATLCVS…TTIRASRGED (228 aa)) constitute a Radical SAM core domain. Cys105 and Cys330 are disulfide-bonded. [4Fe-4S] cluster is bound by residues Cys112, Cys116, and Cys119. S-adenosyl-L-methionine-binding positions include 157–158 (GE), Ser189, 211–213 (SLH), and His287. Cys330 functions as the S-methylcysteine intermediate in the catalytic mechanism.

It belongs to the radical SAM superfamily. RlmN family. Requires [4Fe-4S] cluster as cofactor.

The protein localises to the cytoplasm. It catalyses the reaction adenosine(2503) in 23S rRNA + 2 reduced [2Fe-2S]-[ferredoxin] + 2 S-adenosyl-L-methionine = 2-methyladenosine(2503) in 23S rRNA + 5'-deoxyadenosine + L-methionine + 2 oxidized [2Fe-2S]-[ferredoxin] + S-adenosyl-L-homocysteine. It carries out the reaction adenosine(37) in tRNA + 2 reduced [2Fe-2S]-[ferredoxin] + 2 S-adenosyl-L-methionine = 2-methyladenosine(37) in tRNA + 5'-deoxyadenosine + L-methionine + 2 oxidized [2Fe-2S]-[ferredoxin] + S-adenosyl-L-homocysteine. Its function is as follows. Specifically methylates position 2 of adenine 2503 in 23S rRNA and position 2 of adenine 37 in tRNAs. In Bacteroides fragilis (strain YCH46), this protein is Probable dual-specificity RNA methyltransferase RlmN.